A 637-amino-acid polypeptide reads, in one-letter code: MSQQETHGFQTEVKQLLHLMIHSLYSNKEIFLRELVSNAADAADKLRYLALTNDALYEGDGELRVRISADKEKGTVTIEDNGVGMTRDGVIEHLGTIAKSGTAEFFKNLSGEASKDSQLIGQFGVGFYSAFIVAKKVTVRTRAAGHKANEAVLWESEGEGSFTVDTITKASRGTEITLHLRDEEKEFADEWRLRSIITKYSDHISVPVEMWQEGTPERDGPDGEKIPATEGYWKVMNKATALWMRNKSEISDEEYQEFYKHISHDYTDALLWSHNRVEGKQEYTNLLYIPSKAPWDLWNRDRKHGLKLFVQRVFIMDDAEQFMPSYLRFVQGLIDSNDLPLNVSREILQDNHITKAMRTGITKRVLGMLEKLAKDDAEKYQQFWAEFGQVLKEGPAEDFANRERIAGLLRFASTHTGSAAPTVSLDDYLSRMKEGQNKIYYIVADSHEAAANSPHLELLRKKGIEVLLMSERIDEWLINHLTEYKEKQLHSVTRGELELGELEDAAEKEAQEKLAEESAPLIERIKAALGASVADVKVTSRLTDTPACVVTGEGEMSSQMIKLMQAAGQPVPEVKPTFEVNPAHPLVSRLNDLQDEAAFADWSNLLLQQAQLSEKGSLADPSAFIKLMNQMLLANLK.

The segment at 1–345 (MSQQETHGFQ…SNDLPLNVSR (345 aa)) is a; substrate-binding. The segment at 346 to 562 (EILQDNHITK…EGEMSSQMIK (217 aa)) is b. Residues 563–637 (LMQAAGQPVP…MNQMLLANLK (75 aa)) form a c region.

Belongs to the heat shock protein 90 family. Homodimer.

The protein localises to the cytoplasm. In terms of biological role, molecular chaperone. Has ATPase activity. The protein is Chaperone protein HtpG of Shewanella sp. (strain ANA-3).